The following is a 158-amino-acid chain: Developmental pluripotency-associated protein 3 (158 aa).

2 disordered regions span residues 1 to 38 (MDEP…EILQ) and 54 to 78 (SAKP…VENR). Residues 26–35 (DEGDSPDDSE) are compositionally biased toward acidic residues. Basic residues predominate over residues 58 to 68 (TKYHRRQRVRL).

The protein localises to the nucleus. Its subcellular location is the cytoplasm. In terms of biological role, primordial germ cell (PGCs)-specific protein involved in epigenetic chromatin reprogramming in the zygote following fertilization. In zygotes, DNA demethylation occurs selectively in the paternal pronucleus before the first cell division, while the adjacent maternal pronucleus and certain paternally-imprinted loci are protected from this process. Participates in protection of DNA methylation in the maternal pronucleus by preventing conversion of 5mC to 5hmC: specifically recognizes and binds histone H3 dimethylated at 'Lys-9' (H3K9me2) on maternal genome, and protects maternal genome from TET3-mediated conversion to 5hmC and subsequent DNA demethylation. Does not bind paternal chromatin, which is mainly packed into protamine and does not contain much H3K9me2 mark. Also protects imprinted loci that are marked with H3K9me2 in mature sperm from DNA demethylation in early embryogenesis. May be important for the totipotent/pluripotent states continuing through preimplantation development. Also involved in chromatin condensation in oocytogenesis. This Rattus norvegicus (Rat) protein is Developmental pluripotency-associated protein 3 (Dppa3).